Consider the following 728-residue polypeptide: Catalase-peroxidase 1 (728 aa).

The first 22 residues, methionine 1–alanine 22, serve as a signal peptide directing secretion. A cross-link (tryptophyl-tyrosyl-methioninium (Trp-Tyr) (with M-251)) is located at residues tryptophan 97–tyrosine 225. The active-site Proton acceptor is histidine 98. Residues tyrosine 225–methionine 251 constitute a cross-link (tryptophyl-tyrosyl-methioninium (Tyr-Met) (with W-97)). A heme b-binding site is contributed by histidine 266.

Belongs to the peroxidase family. Peroxidase/catalase subfamily. Homodimer or homotetramer. Heme b is required as a cofactor. In terms of processing, formation of the three residue Trp-Tyr-Met cross-link is important for the catalase, but not the peroxidase activity of the enzyme.

The enzyme catalyses H2O2 + AH2 = A + 2 H2O. The catalysed reaction is 2 H2O2 = O2 + 2 H2O. Its function is as follows. Bifunctional enzyme with both catalase and broad-spectrum peroxidase activity. This chain is Catalase-peroxidase 1, found in Shewanella sp. (strain MR-7).